A 221-amino-acid polypeptide reads, in one-letter code: Sugar transporter SWEET1 (221 aa).

Transmembrane regions (helical) follow at residues 3–23 (AGGV…LGMF), 43–63 (QFLP…YGVL), 68–88 (TLII…LAYL), 102–122 (ATLL…VPDL), 129–149 (LGLF…ADLA), 160–180 (LSFS…IYGF), and 186–206 (YITV…GLFC). The region spanning 10–94 (FLSSACVLFT…LAYLHYSPQK (85 aa)) is the MtN3/slv 1 domain. One can recognise a MtN3/slv 2 domain in the interval 127–212 (QQLGLFCSVF…GLFCKYPPEQ (86 aa)). Positions 149–221 (AKIVQTKSTQ…QDRKYRLLQT (73 aa)) are mediates interaction with TRPV2.

The protein belongs to the SWEET sugar transporter family. In terms of assembly, interacts with TRPV2; the interaction probably occurs intracellularly and depends on TRPV2 N-glycosylation. In terms of tissue distribution, expressed at high levels in lung, placenta, spleen and thymus, at intermediate levels in brain, heart, kidney and testis, and at low levels in bone marrow, liver and lymph node. Within the thymus expression is highest in non-lymphoid cells.

It is found in the golgi apparatus membrane. The protein resides in the cell membrane. Mediates sugar transport across membranes. May regulate the expression of RAG1 a gene involved in V(D)J recombination. This Mus musculus (Mouse) protein is Sugar transporter SWEET1 (Slc50a1).